Reading from the N-terminus, the 41-residue chain is Photosystem II reaction center protein L (41 aa).

Residues Ser-20–Phe-40 form a helical membrane-spanning segment.

This sequence belongs to the PsbL family. In terms of assembly, PSII is composed of 1 copy each of membrane proteins PsbA, PsbB, PsbC, PsbD, PsbE, PsbF, PsbH, PsbI, PsbJ, PsbK, PsbL, PsbM, PsbT, PsbX, PsbY, PsbZ, Psb30/Ycf12, peripheral proteins PsbO, CyanoQ (PsbQ), PsbU, PsbV and a large number of cofactors. It forms dimeric complexes.

It localises to the cellular thylakoid membrane. In terms of biological role, one of the components of the core complex of photosystem II (PSII). PSII is a light-driven water:plastoquinone oxidoreductase that uses light energy to abstract electrons from H(2)O, generating O(2) and a proton gradient subsequently used for ATP formation. It consists of a core antenna complex that captures photons, and an electron transfer chain that converts photonic excitation into a charge separation. This subunit is found at the monomer-monomer interface and is required for correct PSII assembly and/or dimerization. This chain is Photosystem II reaction center protein L, found in Trichodesmium erythraeum (strain IMS101).